An 886-amino-acid chain; its full sequence is Alanine--tRNA ligase (886 aa).

The Zn(2+) site is built by His564, His568, Cys676, and His680.

Belongs to the class-II aminoacyl-tRNA synthetase family. It depends on Zn(2+) as a cofactor.

The protein localises to the cytoplasm. It carries out the reaction tRNA(Ala) + L-alanine + ATP = L-alanyl-tRNA(Ala) + AMP + diphosphate. Functionally, catalyzes the attachment of alanine to tRNA(Ala) in a two-step reaction: alanine is first activated by ATP to form Ala-AMP and then transferred to the acceptor end of tRNA(Ala). Also edits incorrectly charged Ser-tRNA(Ala) and Gly-tRNA(Ala) via its editing domain. This chain is Alanine--tRNA ligase, found in Methylobacterium sp. (strain 4-46).